The following is a 432-amino-acid chain: Trigger factor (432 aa).

In terms of domain architecture, PPIase FKBP-type spans 163–248; sequence GDIAVIDFEG…LKALNKKELP (86 aa).

This sequence belongs to the FKBP-type PPIase family. Tig subfamily.

The protein localises to the cytoplasm. It catalyses the reaction [protein]-peptidylproline (omega=180) = [protein]-peptidylproline (omega=0). Functionally, involved in protein export. Acts as a chaperone by maintaining the newly synthesized protein in an open conformation. Functions as a peptidyl-prolyl cis-trans isomerase. The protein is Trigger factor of Caldanaerobacter subterraneus subsp. tengcongensis (strain DSM 15242 / JCM 11007 / NBRC 100824 / MB4) (Thermoanaerobacter tengcongensis).